Reading from the N-terminus, the 572-residue chain is Methionine--tRNA ligase (572 aa).

The short motif at 11–21 is the 'HIGH' region element; that stretch reads PYINGIKHLGN. The Zn(2+) site is built by C143, C146, C156, and C159. The 'KMSKS' region signature appears at 346–350; the sequence is QFSTS. T349 contacts ATP.

The protein belongs to the class-I aminoacyl-tRNA synthetase family. MetG type 1 subfamily. In terms of assembly, monomer. The cofactor is Zn(2+).

Its subcellular location is the cytoplasm. The enzyme catalyses tRNA(Met) + L-methionine + ATP = L-methionyl-tRNA(Met) + AMP + diphosphate. Is required not only for elongation of protein synthesis but also for the initiation of all mRNA translation through initiator tRNA(fMet) aminoacylation. The polypeptide is Methionine--tRNA ligase (Paracoccus denitrificans (strain Pd 1222)).